A 437-amino-acid chain; its full sequence is Phosphomethylpyrimidine synthase (437 aa).

Substrate-binding positions include Asn-69, Met-98, Tyr-127, His-163, 185–187 (SRG), 226–229 (DALR), and Glu-265. His-269 is a binding site for Zn(2+). A substrate-binding site is contributed by Tyr-292. Zn(2+) is bound at residue His-333. 3 residues coordinate [4Fe-4S] cluster: Cys-409, Cys-412, and Cys-416.

The protein belongs to the ThiC family. It depends on [4Fe-4S] cluster as a cofactor.

It catalyses the reaction 5-amino-1-(5-phospho-beta-D-ribosyl)imidazole + S-adenosyl-L-methionine = 4-amino-2-methyl-5-(phosphooxymethyl)pyrimidine + CO + 5'-deoxyadenosine + formate + L-methionine + 3 H(+). Its pathway is cofactor biosynthesis; thiamine diphosphate biosynthesis. Functionally, catalyzes the synthesis of the hydroxymethylpyrimidine phosphate (HMP-P) moiety of thiamine from aminoimidazole ribotide (AIR) in a radical S-adenosyl-L-methionine (SAM)-dependent reaction. The sequence is that of Phosphomethylpyrimidine synthase from Alkaliphilus oremlandii (strain OhILAs) (Clostridium oremlandii (strain OhILAs)).